The sequence spans 725 residues: Catalase-peroxidase (725 aa).

A cross-link (tryptophyl-tyrosyl-methioninium (Trp-Tyr) (with M-239)) is located at residues 90–213 (WHSAGTYRTG…LAAVQMGLIY (124 aa)). The active-site Proton acceptor is H91. A cross-link (tryptophyl-tyrosyl-methioninium (Tyr-Met) (with W-90)) is located at residues 213-239 (YVNPEGPNGNPDPVAAAKDIRETFARM). Position 254 (H254) interacts with heme b.

It belongs to the peroxidase family. Peroxidase/catalase subfamily. Homodimer or homotetramer. Heme b serves as cofactor. In terms of processing, formation of the three residue Trp-Tyr-Met cross-link is important for the catalase, but not the peroxidase activity of the enzyme.

It catalyses the reaction H2O2 + AH2 = A + 2 H2O. The catalysed reaction is 2 H2O2 = O2 + 2 H2O. Functionally, bifunctional enzyme with both catalase and broad-spectrum peroxidase activity. The chain is Catalase-peroxidase from Hahella chejuensis (strain KCTC 2396).